The following is a 430-amino-acid chain: Tol-Pal system protein TolB (430 aa).

Positions 1-21 (MKQALRVAFGFLMLWAAVLHA) are cleaved as a signal peptide.

This sequence belongs to the TolB family. As to quaternary structure, the Tol-Pal system is composed of five core proteins: the inner membrane proteins TolA, TolQ and TolR, the periplasmic protein TolB and the outer membrane protein Pal. They form a network linking the inner and outer membranes and the peptidoglycan layer.

The protein resides in the periplasm. Part of the Tol-Pal system, which plays a role in outer membrane invagination during cell division and is important for maintaining outer membrane integrity. TolB occupies a key intermediary position in the Tol-Pal system because it communicates directly with both membrane-embedded components, Pal in the outer membrane and TolA in the inner membrane. This Salmonella enteritidis PT4 (strain P125109) protein is Tol-Pal system protein TolB.